Consider the following 670-residue polypeptide: E3 ubiquitin-protein ligase MAG2 (670 aa).

Disordered regions lie at residues 1–84 (MVEP…TSTR) and 124–145 (EVER…RDEH). Residues 20 to 39 (DTLNATSNSSKQGVSNNKRN) show a composition bias toward polar residues. Residues 51 to 66 (SDGRDNAHNYHGEGRR) are compositionally biased toward basic and acidic residues. The RING-type zinc-finger motif lies at 195–250 (CSICLSEEPVAPRMVTCGHIFCLSCLLNFFSIEETVKNKETGYSKKKKYKECPLCG). The disordered stretch occupies residues 609–670 (TEDEKASKEN…LFSSNHQALG (62 aa)). Residues 610 to 622 (EDEKASKENKEFQ) are compositionally biased toward basic and acidic residues. The span at 637-649 (VTDSTDSPPTSNG) shows a compositional bias: low complexity.

Belongs to the RNF10 family.

The protein localises to the cytoplasm. The catalysed reaction is S-ubiquitinyl-[E2 ubiquitin-conjugating enzyme]-L-cysteine + [acceptor protein]-L-lysine = [E2 ubiquitin-conjugating enzyme]-L-cysteine + N(6)-ubiquitinyl-[acceptor protein]-L-lysine.. It participates in protein modification; protein ubiquitination. In terms of biological role, E3 ubiquitin-protein ligase involved in the degradation of non-functional 18S rRNAs in response to stalled ribosomes. Catalyzes monoubiquitination of RPS3/uS3 in response to stalled ribosomes, initiating a HEL2-dependent response that activates the degradation of non-functional 18S rRNAs. This is E3 ubiquitin-protein ligase MAG2 from Saccharomyces cerevisiae (strain ATCC 204508 / S288c) (Baker's yeast).